The following is a 417-amino-acid chain: Gamma-glutamyl phosphate reductase (417 aa).

This sequence belongs to the gamma-glutamyl phosphate reductase family.

The protein localises to the cytoplasm. The catalysed reaction is L-glutamate 5-semialdehyde + phosphate + NADP(+) = L-glutamyl 5-phosphate + NADPH + H(+). The protein operates within amino-acid biosynthesis; L-proline biosynthesis; L-glutamate 5-semialdehyde from L-glutamate: step 2/2. Its function is as follows. Catalyzes the NADPH-dependent reduction of L-glutamate 5-phosphate into L-glutamate 5-semialdehyde and phosphate. The product spontaneously undergoes cyclization to form 1-pyrroline-5-carboxylate. This chain is Gamma-glutamyl phosphate reductase, found in Legionella pneumophila subsp. pneumophila (strain Philadelphia 1 / ATCC 33152 / DSM 7513).